The sequence spans 589 residues: Oligo-1,6-glucosidase IMA3 (589 aa).

The active-site Nucleophile is Asp215. The Proton donor role is filled by Glu277.

It belongs to the glycosyl hydrolase 13 family.

Its subcellular location is the cytoplasm. It carries out the reaction Hydrolysis of (1-&gt;6)-alpha-D-glucosidic linkages in some oligosaccharides produced from starch and glycogen by alpha-amylase, and in isomaltose.. Alpha-glucosidase with broad substrate specificity for alpha-1,4- and alpha-1,6-glucosides. Not required for isomaltose utilization, but overexpression allows the IMA1 null mutant to grow on isomaltose. In Saccharomyces cerevisiae (strain ATCC 204508 / S288c) (Baker's yeast), this protein is Oligo-1,6-glucosidase IMA3 (IMA3).